A 234-amino-acid chain; its full sequence is Isoprenyl transferase (234 aa).

Asp13 is an active-site residue. Asp13 is a Mg(2+) binding site. Substrate-binding positions include 14–17 (GNGR), Trp18, Arg26, His30, and 58–60 (STE). The Proton acceptor role is filled by Asn61. Residues Trp62, Arg64, Arg180, and 186 to 188 (RLS) contribute to the substrate site. A Mg(2+)-binding site is contributed by Glu199.

Belongs to the UPP synthase family. Homodimer. Mg(2+) serves as cofactor.

Catalyzes the condensation of isopentenyl diphosphate (IPP) with allylic pyrophosphates generating different type of terpenoids. The polypeptide is Isoprenyl transferase (uppS) (Helicobacter pylori (strain ATCC 700392 / 26695) (Campylobacter pylori)).